Reading from the N-terminus, the 126-residue chain is Large ribosomal subunit protein bL19 (126 aa).

It belongs to the bacterial ribosomal protein bL19 family.

This protein is located at the 30S-50S ribosomal subunit interface and may play a role in the structure and function of the aminoacyl-tRNA binding site. The polypeptide is Large ribosomal subunit protein bL19 (Albidiferax ferrireducens (strain ATCC BAA-621 / DSM 15236 / T118) (Rhodoferax ferrireducens)).